A 215-amino-acid polypeptide reads, in one-letter code: Disulfide-bond oxidoreductase YfcG (215 aa).

Positions 1-87 (MIDLYFAPTP…YLAEKTGLFL (87 aa)) constitute a GST N-terminal domain. Glutathione-binding positions include N11, Q38, R40, I52, 71–72 (ES), and R132. Residues 90–215 (ETRERAATLQ…AQLGDERSDS (126 aa)) enclose the GST C-terminal domain.

It belongs to the GST superfamily. Nu-class GSH transferase family. In terms of assembly, homodimer.

Functionally, exhibits a very robust glutathione (GSH)-dependent disulfide-bond reductase activity toward the model substrate, 2-hydroxyethyl disulfide; the actual physiological substrates are not known. Also has a low GSH-dependent hydroperoxidase activity toward cumene hydroperoxide, but does not reduce H(2)O(2), tert-butyl hydroperoxide, benzyl peroxide, or lauroyl peroxide. Exhibits little or no GSH transferase activity with most typical electrophilic substrates, and has no detectable transferase activity using glutathionylspermidine (GspSH) as the nucleophilic substrate. Is involved in defense against oxidative stress, probably via its peroxidase activity. The protein is Disulfide-bond oxidoreductase YfcG (yfcG) of Escherichia coli (strain K12).